We begin with the raw amino-acid sequence, 243 residues long: Probable transcriptional regulatory protein LJ_0904 (243 aa).

The tract at residues 1–22 (MSGHSKWHNIQGRKNAQDAKRG) is disordered.

The protein belongs to the TACO1 family.

The protein resides in the cytoplasm. The protein is Probable transcriptional regulatory protein LJ_0904 of Lactobacillus johnsonii (strain CNCM I-12250 / La1 / NCC 533).